Consider the following 312-residue polypeptide: Olfactory receptor 5P4 (312 aa).

Topologically, residues 1–25 are extracellular; sequence METENDTMVTEFIILGLTDSATLRA. N5 carries an N-linked (GlcNAc...) asparagine glycan. Residues 26-46 traverse the membrane as a helical segment; sequence ILFVFFLPVYIVTVVGNISII. Topologically, residues 47–54 are cytoplasmic; sequence LLIRSSPQ. The helical transmembrane segment at 55–75 threads the bilayer; that stretch reads LHTPMYLFLSHLAFVDIGYST. Over 76–99 the chain is Extracellular; that stretch reads SVTPIMLISFLREETTIPLAGCAA. Cysteines 97 and 189 form a disulfide. The chain crosses the membrane as a helical span at residues 100-120; that stretch reads QLGSDVAFGTTECFLLATMAY. Residues 121 to 133 are Cytoplasmic-facing; that stretch reads DRYVAICSPLLYS. A helical transmembrane segment spans residues 134 to 154; that stretch reads TQMSPAICCFLLGASYLGGCM. The Extracellular segment spans residues 155–196; that stretch reads NASSFTGCFVNLNFCGPNKVNHFFCDLFPLVKLSCGHAYIAE. Residues 197–217 form a helical membrane-spanning segment; the sequence is ISPSISSASVLVSTLSTIIVS. Residues 218-237 are Cytoplasmic-facing; it reads YIYILHSILRMRSAEGRNKA. The helical transmembrane segment at 238 to 258 threads the bilayer; sequence FSTCTSHLTAVTLFYGTVLFV. The Extracellular segment spans residues 259-271; it reads YVMPKSSYSADQV. A helical membrane pass occupies residues 272–292; the sequence is KVASVVYTVVIPMLNPLIYSL. Over 293–312 the chain is Cytoplasmic; it reads RNKEVKEAMKKLMARTHWFP.

It belongs to the G-protein coupled receptor 1 family.

The protein resides in the cell membrane. Functionally, potential odorant receptor. The polypeptide is Olfactory receptor 5P4 (Mus musculus (Mouse)).